We begin with the raw amino-acid sequence, 113 residues long: Beta-defensin 112 (113 aa).

3 cysteine pairs are disulfide-bonded: Cys54-Cys82, Cys61-Cys75, and Cys65-Cys83.

Belongs to the beta-defensin family.

It localises to the secreted. Functionally, has antibacterial activity. The sequence is that of Beta-defensin 112 (DEFB112) from Homo sapiens (Human).